The chain runs to 242 residues: Pyridoxine 5'-phosphate synthase (242 aa).

3-amino-2-oxopropyl phosphate is bound at residue N7. 9–10 (DH) serves as a coordination point for 1-deoxy-D-xylulose 5-phosphate. Position 18 (R18) interacts with 3-amino-2-oxopropyl phosphate. H43 acts as the Proton acceptor in catalysis. Residues R45 and H50 each coordinate 1-deoxy-D-xylulose 5-phosphate. E70 functions as the Proton acceptor in the catalytic mechanism. T100 is a 1-deoxy-D-xylulose 5-phosphate binding site. H191 acts as the Proton donor in catalysis. Residues G192 and 213 to 214 (GH) contribute to the 3-amino-2-oxopropyl phosphate site.

It belongs to the PNP synthase family. In terms of assembly, homooctamer; tetramer of dimers.

It localises to the cytoplasm. It carries out the reaction 3-amino-2-oxopropyl phosphate + 1-deoxy-D-xylulose 5-phosphate = pyridoxine 5'-phosphate + phosphate + 2 H2O + H(+). It functions in the pathway cofactor biosynthesis; pyridoxine 5'-phosphate biosynthesis; pyridoxine 5'-phosphate from D-erythrose 4-phosphate: step 5/5. Its function is as follows. Catalyzes the complicated ring closure reaction between the two acyclic compounds 1-deoxy-D-xylulose-5-phosphate (DXP) and 3-amino-2-oxopropyl phosphate (1-amino-acetone-3-phosphate or AAP) to form pyridoxine 5'-phosphate (PNP) and inorganic phosphate. The protein is Pyridoxine 5'-phosphate synthase of Chromobacterium violaceum (strain ATCC 12472 / DSM 30191 / JCM 1249 / CCUG 213 / NBRC 12614 / NCIMB 9131 / NCTC 9757 / MK).